A 417-amino-acid chain; its full sequence is Phosphoglycerate kinase (417 aa).

(2R)-3-phosphoglycerate-binding residues include valine 23, aspartate 24, phenylalanine 25, asparagine 26, glutamine 39, arginine 40, serine 63, histidine 64, glycine 66, arginine 67, leucine 122, arginine 123, histidine 170, and arginine 171. The residue at position 203 (serine 203) is a Phosphoserine. Glycine 214 contributes to the ADP binding site. Glycine 214 contacts CDP. AMP is bound by residues alanine 215 and lysine 216. Alanine 215 contributes to the ATP binding site. Alanine 215 is a binding site for Mg(2+). Aspartate 219 is a CDP binding site. Mg(2+) is bound at residue aspartate 219. Residue lysine 220 participates in AMP binding. Lysine 220 contributes to the ATP binding site. Glycine 238 contacts ADP. Glycine 238 is a CDP binding site. Alanine 239 and glycine 313 together coordinate AMP. The ATP site is built by alanine 239 and glycine 313. Glycine 338 and phenylalanine 343 together coordinate CDP. Phenylalanine 343 contributes to the ADP binding site. Glutamate 344 is a binding site for AMP. ATP is bound by residues glutamate 344, aspartate 375, and threonine 376. Aspartate 375 is a Mg(2+) binding site.

This sequence belongs to the phosphoglycerate kinase family. As to quaternary structure, monomer. It depends on Mg(2+) as a cofactor. In terms of processing, dephosphorylated by PTC1 and PTC2 at Ser-203; the protein is cytosolic when dephosphorylated.

It localises to the cytoplasm. It is found in the cytosol. The protein localises to the mitochondrion. It catalyses the reaction (2R)-3-phosphoglycerate + ATP = (2R)-3-phospho-glyceroyl phosphate + ADP. It participates in carbohydrate degradation; glycolysis; pyruvate from D-glyceraldehyde 3-phosphate: step 2/5. Catalyzes one of the two ATP producing reactions in the glycolytic pathway via the reversible conversion of 1,3-diphosphoglycerate to 3-phosphoglycerate. Both L- and D- forms of purine and pyrimidine nucleotides can be used as substrates, but the activity is much lower on pyrimidines. Negatively regulates the biosynthesis of acetyl-CoA from pyruvate in the mitochondrion and consequently also attenuates aflatoxin production. The polypeptide is Phosphoglycerate kinase (Aspergillus flavus (strain ATCC 200026 / FGSC A1120 / IAM 13836 / NRRL 3357 / JCM 12722 / SRRC 167)).